A 744-amino-acid polypeptide reads, in one-letter code: MAGRSMQAARCPTDELSLSNCAVVSEKDYQSGQHVIVRTSPNHKYIFTLRTHPSVVPGSVAFSLPQRKWAGLSIGQEIEVALYSFDKAKQCIGTMTIEIDFLQKKNIDSNPYDTDKMAAEFIQQFNNQAFSVGQQLVFSFNDKLFGLLVKDIEAMDPSILKGEPASGKRQKIEVGLVVGNSQVAFEKAENSSLNLIGKAKTKENRQSIINPDWNFEKMGIGGLDKEFSDIFRRAFASRVFPPEIVEQMGCKHVKGILLYGPPGCGKTLLARQIGKMLNAREPKVVNGPEILNKYVGESEANIRKLFADAEEEQRRLGANSGLHIIIFDEIDAICKQRGSMAGSTGVHDTVVNQLLSKIDGVEQLNNILVIGMTNRPDLIDEALLRPGRLEVKMEIGLPDEKGRLQILHIHTARMRGHQLLSADVDIKELAVETKNFSGAELEGLVRAAQSTAMNRHIKASTKVEVDMEKAESLQVTRGDFLASLENDIKPAFGTNQEDYASYIMNGIIKWGDPVTRVLDDGELLVQQTKNSDRTPLVSVLLEGPPHSGKTALAAKIAEESNFPFIKICSPDKMIGFSETAKCQAMKKIFDDAYKSQLSCVVVDDIERLLDYVPIGPRFSNLVLQALLVLLKKAPPQGRKLLIIGTTSRKDVLQEMEMLNAFSTTIHVPNIATGEQLLEALELLGNFKDKERTTIAQQVKGKKVWIGIKKLLMLIEMSLQMDPEYRVRKFLALLREEGASPLDFD.

Lys-105 carries the N6-acetyllysine modification. Ser-207 carries the phosphoserine modification. Tyr-259 bears the Phosphotyrosine mark. ATP is bound by residues 505–510 (NGIIKW) and 545–552 (PHSGKTAL). A Mg(2+)-binding site is contributed by Thr-550. Ser-569 is subject to Phosphoserine; by CDK16.

It belongs to the AAA ATPase family. In terms of assembly, homohexamer. Interacts with GABARAP and GABARAPL2. Interacts with GRIA2. Interacts with PLK2, leading to disrupt the interaction with GRIA2. Interacts with MUSK; may regulate MUSK endocytosis and activity. Interacts with CDK16. Requires Mg(2+) as cofactor. In terms of processing, phosphorylation at Ser-569 interferes with homohexamerization.

It localises to the cytoplasm. The catalysed reaction is ATP + H2O = ADP + phosphate + H(+). In terms of biological role, required for vesicle-mediated transport. Catalyzes the fusion of transport vesicles within the Golgi cisternae. Is also required for transport from the endoplasmic reticulum to the Golgi stack. Seems to function as a fusion protein required for the delivery of cargo proteins to all compartments of the Golgi stack independent of vesicle origin. Interaction with AMPAR subunit GRIA2 leads to influence GRIA2 membrane cycling. The protein is Vesicle-fusing ATPase (NSF) of Cricetulus griseus (Chinese hamster).